The sequence spans 332 residues: tRNA dimethylallyltransferase (332 aa).

17 to 24 serves as a coordination point for ATP; sequence GPTCSGKS. 19-24 contributes to the substrate binding site; it reads TCSGKS. Interaction with substrate tRNA stretches follow at residues 42–45 and 166–170; these read DSMQ and QRISR.

This sequence belongs to the IPP transferase family. As to quaternary structure, monomer. Requires Mg(2+) as cofactor.

It catalyses the reaction adenosine(37) in tRNA + dimethylallyl diphosphate = N(6)-dimethylallyladenosine(37) in tRNA + diphosphate. Its function is as follows. Catalyzes the transfer of a dimethylallyl group onto the adenine at position 37 in tRNAs that read codons beginning with uridine, leading to the formation of N6-(dimethylallyl)adenosine (i(6)A). The chain is tRNA dimethylallyltransferase from Gluconobacter oxydans (strain 621H) (Gluconobacter suboxydans).